A 432-amino-acid polypeptide reads, in one-letter code: Adenosylhomocysteinase (432 aa).

Substrate is bound by residues T57, D131, and E156. Position 157 to 159 (157 to 159 (TTT)) interacts with NAD(+). S183 carries the post-translational modification Phosphoserine. Residues K186 and D190 each contribute to the substrate site. The residue at position 186 (K186) is an N6-(2-hydroxyisobutyryl)lysine. Phosphotyrosine is present on Y193. Residues 222–227 (GDVGKG), E243, N248, 299–301 (IGH), N346, H353, K426, 426–430 (KPDHY), and Y430 contribute to the NAD(+) site.

It belongs to the adenosylhomocysteinase family. As to quaternary structure, homotetramer. Interaction with AHCYL1. NAD(+) is required as a cofactor.

Its subcellular location is the cytoplasm. It is found in the melanosome. The protein localises to the nucleus. The protein resides in the endoplasmic reticulum. It carries out the reaction S-adenosyl-L-homocysteine + H2O = L-homocysteine + adenosine. It functions in the pathway amino-acid biosynthesis; L-homocysteine biosynthesis; L-homocysteine from S-adenosyl-L-homocysteine: step 1/1. Functionally, catalyzes the hydrolysis of S-adenosyl-L-homocysteine to form adenosine and homocysteine. Binds copper ions. The protein is Adenosylhomocysteinase (Ahcy) of Rattus norvegicus (Rat).